We begin with the raw amino-acid sequence, 634 residues long: Probable potassium transport system protein Kup (634 aa).

Helical transmembrane passes span 21-41, 58-78, 110-130, 152-172, 179-199, 223-243, 258-278, 296-316, 348-368, 377-397, 403-423, and 427-447; these read LVIG…LYTL, VLGI…LKYV, MYVV…DGVI, PFVV…QRFG, AFGP…VYNM, WHAV…EALY, WQFV…ALML, ALYP…QALI, IYVP…VIGF, AYGV…IIYA, VPAP…CAFF, and IIKF…LFTL.

The protein belongs to the HAK/KUP transporter (TC 2.A.72) family.

The protein resides in the cell inner membrane. The catalysed reaction is K(+)(in) + H(+)(in) = K(+)(out) + H(+)(out). Functionally, transport of potassium into the cell. Likely operates as a K(+):H(+) symporter. In Xanthomonas euvesicatoria pv. vesicatoria (strain 85-10) (Xanthomonas campestris pv. vesicatoria), this protein is Probable potassium transport system protein Kup.